A 107-amino-acid polypeptide reads, in one-letter code: MTAFAYIGAALAEIAGCFAFWAWLRMDKSVWWVVPGIASLALFAYLLTLVEADHAGRTYAAYGGVYIAAALLWLWAVEGAKPDRWDLIGAAVCLGGAAIILFGPRGG.

The next 4 membrane-spanning stretches (helical) occupy residues 4–24 (FAYI…WAWL), 30–50 (VWWV…LTLV), 60–80 (AAYG…VEGA), and 87–107 (LIGA…PRGG).

The protein belongs to the UPF0060 family.

It is found in the cell inner membrane. The chain is UPF0060 membrane protein Sala_0701 from Sphingopyxis alaskensis (strain DSM 13593 / LMG 18877 / RB2256) (Sphingomonas alaskensis).